The sequence spans 247 residues: Carboxy-S-adenosyl-L-methionine synthase (247 aa).

S-adenosyl-L-methionine is bound by residues Tyr39, Gly64–Ser66, Asp89–Asn90, Asp117–Ile118, Asn132, and Arg199.

It belongs to the class I-like SAM-binding methyltransferase superfamily. Cx-SAM synthase family. In terms of assembly, homodimer.

The enzyme catalyses prephenate + S-adenosyl-L-methionine = carboxy-S-adenosyl-L-methionine + 3-phenylpyruvate + H2O. In terms of biological role, catalyzes the conversion of S-adenosyl-L-methionine (SAM) to carboxy-S-adenosyl-L-methionine (Cx-SAM). In Citrobacter koseri (strain ATCC BAA-895 / CDC 4225-83 / SGSC4696), this protein is Carboxy-S-adenosyl-L-methionine synthase.